The following is a 458-amino-acid chain: Adenylosuccinate synthetase (458 aa).

GTP-binding positions include 17 to 23 (GDEGKGK) and 45 to 47 (GHT). Aspartate 18 serves as the catalytic Proton acceptor. Mg(2+)-binding residues include aspartate 18 and glycine 45. IMP is bound by residues 18-21 (DEGK), 43-46 (NAGH), threonine 137, arginine 151, glutamine 247, threonine 262, and arginine 330. Histidine 46 serves as the catalytic Proton donor. 326–332 (VTTGRSR) is a substrate binding site. GTP is bound by residues arginine 332, 358–360 (KLD), and 440–442 (STG).

It belongs to the adenylosuccinate synthetase family. In terms of assembly, homodimer. It depends on Mg(2+) as a cofactor.

The protein localises to the cytoplasm. The catalysed reaction is IMP + L-aspartate + GTP = N(6)-(1,2-dicarboxyethyl)-AMP + GDP + phosphate + 2 H(+). The protein operates within purine metabolism; AMP biosynthesis via de novo pathway; AMP from IMP: step 1/2. Its function is as follows. Plays an important role in the de novo pathway of purine nucleotide biosynthesis. Catalyzes the first committed step in the biosynthesis of AMP from IMP. The polypeptide is Adenylosuccinate synthetase (Albidiferax ferrireducens (strain ATCC BAA-621 / DSM 15236 / T118) (Rhodoferax ferrireducens)).